Consider the following 232-residue polypeptide: LexA repressor (232 aa).

The segment at residues 26 to 46 is a DNA-binding region (H-T-H motif); sequence FDEMKDALDLRSKSGIHRLIT. Catalysis depends on for autocatalytic cleavage activity residues S153 and K191.

The protein belongs to the peptidase S24 family. Homodimer.

It carries out the reaction Hydrolysis of Ala-|-Gly bond in repressor LexA.. Its function is as follows. Represses a number of genes involved in the response to DNA damage (SOS response), including recA and lexA. In the presence of single-stranded DNA, RecA interacts with LexA causing an autocatalytic cleavage which disrupts the DNA-binding part of LexA, leading to derepression of the SOS regulon and eventually DNA repair. The chain is LexA repressor from Bradyrhizobium sp. (strain ORS 278).